The chain runs to 678 residues: DNA ligase (678 aa).

Residues 36-40 (DSEFD), 85-86 (SL), and Glu117 each bind NAD(+). The N6-AMP-lysine intermediate role is filled by Lys119. Arg140, Glu177, Lys294, and Lys318 together coordinate NAD(+). Residues Cys412, Cys415, Cys430, and Cys436 each coordinate Zn(2+). Residues 595–678 (IIDAPLLGKT…TWWQHYGNAV (84 aa)) enclose the BRCT domain.

The protein belongs to the NAD-dependent DNA ligase family. LigA subfamily. Mg(2+) is required as a cofactor. Requires Mn(2+) as cofactor.

It carries out the reaction NAD(+) + (deoxyribonucleotide)n-3'-hydroxyl + 5'-phospho-(deoxyribonucleotide)m = (deoxyribonucleotide)n+m + AMP + beta-nicotinamide D-nucleotide.. Its function is as follows. DNA ligase that catalyzes the formation of phosphodiester linkages between 5'-phosphoryl and 3'-hydroxyl groups in double-stranded DNA using NAD as a coenzyme and as the energy source for the reaction. It is essential for DNA replication and repair of damaged DNA. This chain is DNA ligase, found in Dichelobacter nodosus (strain VCS1703A).